The primary structure comprises 347 residues: Putative [LysW]-L-2-aminoadipate/[LysW]-L-glutamate phosphate reductase (347 aa).

NADP(+) is bound at residue 9–12; it reads SGYI. The active site involves cysteine 149. Asparagine 314 serves as a coordination point for NADP(+).

This sequence belongs to the NAGSA dehydrogenase family. Type 1 subfamily. LysY sub-subfamily.

The protein resides in the cytoplasm. The catalysed reaction is [amino-group carrier protein]-C-terminal-N-(1-carboxy-5-oxopentan-1-yl)-L-glutamine + phosphate + NADP(+) = [amino-group carrier protein]-C-terminal-N-(1-carboxy-5-phosphooxy-5-oxopentan-1-yl)-L-glutamine + NADPH + H(+). It carries out the reaction [amino-group carrier protein]-C-terminal-gamma-(L-glutamyl-5-semialdehyde)-L-glutamate + phosphate + NADP(+) = [amino-group carrier protein]-C-terminal-gamma-(5-phospho-L-glutamyl)-L-glutamate + NADPH + H(+). It participates in amino-acid biosynthesis; L-lysine biosynthesis via AAA pathway; L-lysine from L-alpha-aminoadipate (Thermus route): step 3/5. The protein operates within amino-acid biosynthesis; L-arginine biosynthesis. In terms of biological role, involved in both the arginine and lysine biosynthetic pathways. The polypeptide is Putative [LysW]-L-2-aminoadipate/[LysW]-L-glutamate phosphate reductase (Picrophilus torridus (strain ATCC 700027 / DSM 9790 / JCM 10055 / NBRC 100828 / KAW 2/3)).